Here is a 375-residue protein sequence, read N- to C-terminus: Enoyl-[acyl-carrier-protein] reductase, mitochondrial (375 aa).

The N-terminal 37 residues, 1–37 (MAALMESVVGRALKFSSTANFRSIRRGETPTLCIKSF), are a transit peptide targeting the mitochondrion. The active-site Proton donor is Y96. NADP(+) contacts are provided by residues N169, 195-198 (TSIV), 218-220 (RDR), 287-290 (YGGM), 312-314 (FWL), and K370.

It belongs to the zinc-containing alcohol dehydrogenase family. Quinone oxidoreductase subfamily. Homodimer.

Its subcellular location is the mitochondrion. The enzyme catalyses a 2,3-saturated acyl-[ACP] + NADP(+) = a (2E)-enoyl-[ACP] + NADPH + H(+). In terms of biological role, catalyzes the NADPH-dependent reduction of trans-2-enoyl thioesters in mitochondrial fatty acid synthesis (fatty acid synthesis type II). Fatty acid chain elongation in mitochondria uses acyl carrier protein (ACP) as an acyl group carrier, but the enzyme accepts both ACP and CoA thioesters as substrates in vitro. In Arabidopsis thaliana (Mouse-ear cress), this protein is Enoyl-[acyl-carrier-protein] reductase, mitochondrial.